The following is a 226-amino-acid chain: NADH-quinone oxidoreductase subunit B 2 (226 aa).

[4Fe-4S] cluster is bound by residues Cys-37, Cys-38, Cys-103, and Cys-132.

This sequence belongs to the complex I 20 kDa subunit family. In terms of assembly, NDH-1 is composed of 14 different subunits. Subunits NuoB, C, D, E, F, and G constitute the peripheral sector of the complex. Requires [4Fe-4S] cluster as cofactor.

It localises to the cell membrane. It catalyses the reaction a quinone + NADH + 5 H(+)(in) = a quinol + NAD(+) + 4 H(+)(out). In terms of biological role, NDH-1 shuttles electrons from NADH, via FMN and iron-sulfur (Fe-S) centers, to quinones in the respiratory chain. The immediate electron acceptor for the enzyme in this species is believed to be a menaquinone. Couples the redox reaction to proton translocation (for every two electrons transferred, four hydrogen ions are translocated across the cytoplasmic membrane), and thus conserves the redox energy in a proton gradient. The chain is NADH-quinone oxidoreductase subunit B 2 from Salinispora arenicola (strain CNS-205).